Consider the following 404-residue polypeptide: Biflaviolin synthase CYP158A2 (404 aa).

Residues Arg-288 and Leu-293 each coordinate flaviolin. Position 353 (Cys-353) interacts with heme.

This sequence belongs to the cytochrome P450 family. Requires heme as cofactor.

It catalyses the reaction 2 flaviolin + 2 reduced [2Fe-2S]-[ferredoxin] + O2 + H(+) = 3,3'-biflaviolin + 2 oxidized [2Fe-2S]-[ferredoxin] + 2 H2O. It carries out the reaction 2 flaviolin + 2 reduced [2Fe-2S]-[ferredoxin] + O2 + H(+) = 3,8'-biflaviolin + 2 oxidized [2Fe-2S]-[ferredoxin] + 2 H2O. Its pathway is pigment biosynthesis. Catalyzes oxidative C-C coupling reaction to polymerize flaviolin and form highly conjugated pigments which protect the soil bacterium from deleterious effects of UV irradiation (three isomers of biflaviolin and one triflaviolin). This chain is Biflaviolin synthase CYP158A2, found in Streptomyces coelicolor (strain ATCC BAA-471 / A3(2) / M145).